Reading from the N-terminus, the 110-residue chain is MEVAAKLRGAGMSAQKARLVADQIRGKSVEEALDLLTFSTKKGAALIKKVLESAVANAEHNEGADVDELKVSTIFVDEGLTMKRIRPRAKGRADRILKRTCHITVKVADQ.

It belongs to the universal ribosomal protein uL22 family. In terms of assembly, part of the 50S ribosomal subunit.

Its function is as follows. This protein binds specifically to 23S rRNA; its binding is stimulated by other ribosomal proteins, e.g. L4, L17, and L20. It is important during the early stages of 50S assembly. It makes multiple contacts with different domains of the 23S rRNA in the assembled 50S subunit and ribosome. Functionally, the globular domain of the protein is located near the polypeptide exit tunnel on the outside of the subunit, while an extended beta-hairpin is found that lines the wall of the exit tunnel in the center of the 70S ribosome. The protein is Large ribosomal subunit protein uL22 of Saccharophagus degradans (strain 2-40 / ATCC 43961 / DSM 17024).